A 160-amino-acid chain; its full sequence is Biogenesis of lysosome-related organelles complex 1 subunit 5 (160 aa).

It belongs to the BLOC1S5 family. In terms of assembly, component of the biogenesis of lysosome-related organelles complex-1 (BLOC-1) composed of Blos1, Blos2, Blos3, Blos4, Dysb, Muted, Pldn and Snapin.

Its function is as follows. Component of the biogenesis of lysosome-related organelles complex-1 (BLOC-1) involved in pigment granule biogenesis. The sequence is that of Biogenesis of lysosome-related organelles complex 1 subunit 5 from Drosophila melanogaster (Fruit fly).